Consider the following 361-residue polypeptide: Cilia- and flagella-associated protein 263 (361 aa).

Belongs to the CFAP263 family. As to quaternary structure, forms a complex with CFAP184; the interaction is required for functional activity in cilia.

The protein localises to the cell projection. The protein resides in the cilium. In complex with CFAP263, acts as a regulator of ciliary beating that connects radial spoke 3 (RS3) to the inner dynein arm (IDA) and the nexin-dynein regulatory complex (N-DRC). The complex is positioned parallel to N-DRC and forms a connection between the arch at the base of RS3, the IDA tail and N-DRC. This is Cilia- and flagella-associated protein 263 (CFAP263) from Tetrahymena thermophila (strain SB210).